The chain runs to 494 residues: Tripartite motif-containing protein 5 (494 aa).

Alanine 2 carries the N-acetylalanine modification. Residues cysteine 15–arginine 59 form an RING-type zinc finger. The residue at position 86 (serine 86) is a Phosphoserine. The segment at glutamine 91–valine 132 adopts a B box-type zinc-finger fold. Zn(2+)-binding residues include cysteine 96, histidine 99, cysteine 118, and histidine 124. Residues valine 132–methionine 222 adopt a coiled-coil conformation. Residues phenylalanine 186 to asparagine 199 are required for interaction with GABARAP and for autophagy. In terms of domain architecture, B30.2/SPRY spans proline 280 to serine 494.

The protein belongs to the TRIM/RBCC family. Can form homodimers and homotrimers. In addition to lower-order dimerization, also exhibits a higher-order multimerization and both low- and high-order multimerizations are essential for its restriction activity. Interacts with BTBD1 and BTBD2. Interacts with PSMC4, PSMC5, PSMD7 and HSPA8/HSC70. Interacts (via B30.2/SPRY domain) with HSPA1A/B. Interacts with PSMC2, MAP3K7/TAK1, TAB2 and TAB3. Interacts with SQSTM1. Interacts with TRIM6 and TRIM34. Interacts with ULK1 (phosphorylated form), GABARAP, GABARAPL1, GABARAPL2, MAP1LC3A, MAP1LC3C and BECN1. In terms of processing, degraded in a proteasome-independent fashion in the absence of viral infection but in a proteasome-dependent fashion following exposure to restriction sensitive virus. Post-translationally, autoubiquitinated in a RING finger- and UBE2D2-dependent manner. Monoubiquitinated by TRIM21. Deubiquitinated by Yersinia YopJ. Ubiquitination may not lead to proteasomal degradation.

It is found in the cytoplasm. The protein localises to the nucleus. It carries out the reaction S-ubiquitinyl-[E2 ubiquitin-conjugating enzyme]-L-cysteine + [acceptor protein]-L-lysine = [E2 ubiquitin-conjugating enzyme]-L-cysteine + N(6)-ubiquitinyl-[acceptor protein]-L-lysine.. Its pathway is protein modification; protein ubiquitination. Its function is as follows. Capsid-specific restriction factor that prevents infection from non-host-adapted retroviruses. Blocks viral replication early in the life cycle, after viral entry but before reverse transcription. In addition to acting as a capsid-specific restriction factor, also acts as a pattern recognition receptor that activates innate immune signaling in response to the retroviral capsid lattice. Binding to the viral capsid triggers its E3 ubiquitin ligase activity, and in concert with the heterodimeric ubiquitin conjugating enzyme complex UBE2V1-UBE2N (also known as UBC13-UEV1A complex) generates 'Lys-63'-linked polyubiquitin chains, which in turn are catalysts in the autophosphorylation of the MAP3K7/TAK1 complex (includes TAK1, TAB2, and TAB3). Activation of the MAP3K7/TAK1 complex by autophosphorylation results in the induction and expression of NF-kappa-B and MAPK-responsive inflammatory genes, thereby leading to an innate immune response in the infected cell. Plays a role in regulating autophagy through activation of autophagy regulator BECN1 by causing its dissociation from its inhibitors BCL2 and TAB2. The polypeptide is Tripartite motif-containing protein 5 (TRIM5) (Pithecia pithecia (White-faced saki)).